We begin with the raw amino-acid sequence, 784 residues long: Ubiquitin carboxyl-terminal hydrolase 1 (784 aa).

Disordered regions lie at residues 1–21 (MPGV…SKKN) and 34–56 (KRAL…RGSE). Polar residues predominate over residues 7 to 16 (SESNGLSRGS). Phosphoserine occurs at positions 16 and 42. A compositionally biased stretch (basic and acidic residues) spans 45 to 56 (NEEKTSEYRGSE). Residue serine 67 is modified to Phosphoserine. Residues 81-784 (VGLNNLGNTC…TPYLLFYKKL (704 aa)) enclose the USP domain. The active-site Nucleophile is cysteine 90. Composition is skewed to basic and acidic residues over residues 233–243 (VEEQSLQKEET) and 252–264 (DSMR…KEQL). Disordered regions lie at residues 233 to 342 (VEEQ…INWL) and 362 to 414 (TTNQ…KSGN). At serine 474 the chain carries Phosphoserine. Catalysis depends on histidine 592, which acts as the Proton acceptor. Positions 684 to 725 (NPDKVVGTPFTDNRNSETNDTTNGTHESDRNKESSDQTGVNM) are disordered. A compositionally biased stretch (polar residues) spans 693 to 708 (FTDNRNSETNDTTNGT). The segment covering 709-718 (HESDRNKESS) has biased composition (basic and acidic residues). Serine 767 carries the post-translational modification Phosphoserine.

The protein belongs to the peptidase C19 family. As to quaternary structure, interacts with FANCD2 and PCNA. Interacts with WDR48. Interacts with ATAD5; the interaction regulates USP1-mediated PCNA deubiquitination. In terms of processing, autocatalytic cleavage of USP1 following UV irradiation inactivates it, leading to an increase in ubiquitinated PCNA, recruitment of POLH and translesion synthesis. Post-translationally, ubiquitinated by the CRL2(KLHDC2) complex following autocatalytic cleavage, leading to its degradation: the CRL2(KLHDC2) complex recognizes the diglycine (Gly-Gly) at the C-terminus.

The protein localises to the nucleus. It catalyses the reaction Thiol-dependent hydrolysis of ester, thioester, amide, peptide and isopeptide bonds formed by the C-terminal Gly of ubiquitin (a 76-residue protein attached to proteins as an intracellular targeting signal).. In terms of biological role, negative regulator of DNA damage repair which specifically deubiquitinates monoubiquitinated FANCD2. Also involved in PCNA-mediated translesion synthesis (TLS) by deubiquitinating monoubiquitinated PCNA. Has almost no deubiquitinating activity by itself and requires the interaction with WDR48 to have a high activity. The polypeptide is Ubiquitin carboxyl-terminal hydrolase 1 (Mus musculus (Mouse)).